Here is a 312-residue protein sequence, read N- to C-terminus: MNPVVTGPIIRLSADDRDHIADLVRACTEHDGVSPLNESGWFGLQGLTASHTHWIARDGKQVVGYAQADAREHTVQLMVAPPARRQGIATTLAKAAWQLHPAMWWSFGDCPGARELATQLGLREVRKLLKMSLPMPADQPHDAHLPEGLRLDHFRDDDLDQLVAVNHAAFVHHPEQGAMTAEDARNRMAQDWFDPAGLLVARDEAGTLVGFHWTKVADEDGRPRGEVYVLGVDPDFEGKGVGRALLDAGILHMRELGVEAIDLYVEGANERVVHMYERAGFSVVSTDVGYAPAKPARHQDHGRQSSPQERDA.

N-acetyltransferase domains are found at residues 8–136 (PIIR…LPMP) and 149–301 (LRLD…HQDH). Glutamate 38 provides a ligand contact to 1D-myo-inositol 2-(L-cysteinylamino)-2-deoxy-alpha-D-glucopyranoside. Residues 77-79 (LMV) and 85-90 (RQGIAT) contribute to the acetyl-CoA site. 1D-myo-inositol 2-(L-cysteinylamino)-2-deoxy-alpha-D-glucopyranoside contacts are provided by glutamate 175, lysine 215, and glutamate 226. Residues 230 to 232 (LGV) and 237 to 243 (EGKGVGR) contribute to the acetyl-CoA site. Tyrosine 264 provides a ligand contact to 1D-myo-inositol 2-(L-cysteinylamino)-2-deoxy-alpha-D-glucopyranoside. 269-274 (NERVVH) is a binding site for acetyl-CoA. The segment at 292-312 (PAKPARHQDHGRQSSPQERDA) is disordered. Residues 297 to 312 (RHQDHGRQSSPQERDA) are compositionally biased toward basic and acidic residues.

Belongs to the acetyltransferase family. MshD subfamily. As to quaternary structure, monomer.

It catalyses the reaction 1D-myo-inositol 2-(L-cysteinylamino)-2-deoxy-alpha-D-glucopyranoside + acetyl-CoA = mycothiol + CoA + H(+). Functionally, catalyzes the transfer of acetyl from acetyl-CoA to desacetylmycothiol (Cys-GlcN-Ins) to form mycothiol. The protein is Mycothiol acetyltransferase of Propionibacterium freudenreichii subsp. shermanii (strain ATCC 9614 / DSM 4902 / CIP 103027 / NCIMB 8099 / CIRM-BIA1).